We begin with the raw amino-acid sequence, 431 residues long: Probable prephenate dehydrogenase [NADP(+)] (431 aa).

5 to 34 lines the NADP(+) pocket; the sequence is FQVGIIGFGDMGRLYAEYISKAGWRVNVCD. In terms of domain architecture, Prephenate/arogenate dehydrogenase spans 5-285; it reads FQVGIIGFGD…GENMDRNSSG (281 aa).

This sequence belongs to the prephenate/arogenate dehydrogenase family.

The protein resides in the cytoplasm. It carries out the reaction prephenate + NADP(+) = 3-(4-hydroxyphenyl)pyruvate + CO2 + NADPH. The protein operates within amino-acid biosynthesis; L-tyrosine biosynthesis; (4-hydroxyphenyl)pyruvate from prephenate (NADP(+) route): step 1/1. The polypeptide is Probable prephenate dehydrogenase [NADP(+)] (tyr1) (Schizosaccharomyces pombe (strain 972 / ATCC 24843) (Fission yeast)).